A 469-amino-acid polypeptide reads, in one-letter code: UDP-N-acetylmuramoylalanine--D-glutamate ligase (469 aa).

110–116 (GTNGKST) contributes to the ATP binding site.

It belongs to the MurCDEF family.

Its subcellular location is the cytoplasm. It catalyses the reaction UDP-N-acetyl-alpha-D-muramoyl-L-alanine + D-glutamate + ATP = UDP-N-acetyl-alpha-D-muramoyl-L-alanyl-D-glutamate + ADP + phosphate + H(+). It functions in the pathway cell wall biogenesis; peptidoglycan biosynthesis. Cell wall formation. Catalyzes the addition of glutamate to the nucleotide precursor UDP-N-acetylmuramoyl-L-alanine (UMA). The polypeptide is UDP-N-acetylmuramoylalanine--D-glutamate ligase (Synechococcus sp. (strain JA-3-3Ab) (Cyanobacteria bacterium Yellowstone A-Prime)).